The sequence spans 205 residues: Proteasome subunit beta type-3 (205 aa).

The protein belongs to the peptidase T1B family. In terms of assembly, the 26S proteasome consists of a 20S proteasome core and two 19S regulatory subunits. The 20S proteasome core is composed of 28 subunits that are arranged in four stacked rings, resulting in a barrel-shaped structure. The two end rings are each formed by seven alpha subunits, and the two central rings are each formed by seven beta subunits. The catalytic chamber with the active sites is on the inside of the barrel.

The protein resides in the cytoplasm. It is found in the nucleus. In terms of biological role, non-catalytic component of the proteasome, a multicatalytic proteinase complex which is characterized by its ability to cleave peptides with Arg, Phe, Tyr, Leu, and Glu adjacent to the leaving group at neutral or slightly basic pH. The proteasome has an ATP-dependent proteolytic activity. This is Proteasome subunit beta type-3 (psmb3) from Oncorhynchus mykiss (Rainbow trout).